We begin with the raw amino-acid sequence, 297 residues long: Carbamate kinase (297 aa).

Belongs to the carbamate kinase family.

Its subcellular location is the cytoplasm. The catalysed reaction is hydrogencarbonate + NH4(+) + ATP = carbamoyl phosphate + ADP + H2O + H(+). The enzyme catalyses carbamate + ATP = carbamoyl phosphate + ADP. It carries out the reaction hydrogencarbonate + NH4(+) = carbamate + H2O + H(+). It functions in the pathway nitrogen metabolism; (S)-allantoin degradation. In terms of biological role, kinase involved in the anaerobic nitrogen utilization via the assimilation of allantoin. Catalyzes the transfer of a phosphate group from carbamoyl phosphate to ADP to produce ATP and leave carbamate, which spontaneously hydrolyzes to ammonia and hydrogencarbonate. The polypeptide is Carbamate kinase (Escherichia coli (strain K12)).